A 715-amino-acid polypeptide reads, in one-letter code: Arginine kinase (715 aa).

Approximate repeat units follow at residues 1 to 366 (MADP…IAKK) and 367 to 715 (RSVF…KSTK). Residues 11 to 95 (KSKNAFPDPL…FDAIIEDYHS (85 aa)) enclose the Phosphagen kinase N-terminal 1 domain. A substrate-binding site is contributed by 68-72 (GVGVY). The Phosphagen kinase C-terminal 1 domain maps to 123–362 (YIRSTRIRVA…KALMELEKEA (240 aa)). ATP contacts are provided by residues 126–130 (STRIR) and His-189. Glu-229 is a binding site for substrate. Arg-233 lines the ATP pocket. Position 275 (Cys-275) interacts with substrate. ATP-binding positions include 284–288 (RASVH) and 312–317 (RGIHGE). Glu-317 serves as a coordination point for substrate. In terms of domain architecture, Phosphagen kinase N-terminal 2 spans 365 to 447 (KKRSVFPEVL…FDKIVEDYHS (83 aa)). Residues 475–714 (YIRSTRIRVA…KKLLEIEKST (240 aa)) enclose the Phosphagen kinase C-terminal 2 domain.

Belongs to the ATP:guanido phosphotransferase family. In terms of assembly, monomer.

The enzyme catalyses L-arginine + ATP = N(omega)-phospho-L-arginine + ADP + H(+). The chain is Arginine kinase from Anthopleura japonica (Sea anemone).